A 307-amino-acid polypeptide reads, in one-letter code: MAQPQQHKGGYKQINKALNICAFEDYLSAQLKHLPQLADVEQLSPRVIRVLGQNAGKGTNTYIVGTGPQRLIIDTGQGIPEWADILDATLKERSISLSHVFLSHWHGDHTGGVPDLLRLYPNLAGAIYKNSPGSDQQPIDDGQVFRVEGATIRAVHGPGHSHDHMCFILEEENAMFTGDNVLGHGTSAVEELGVYMETLRKLNSHHCAVGYPAHGDVITNLPAKIAGELAQKMRREKQVLLTLDRINKESRRTGQVVLVHGDGIDEEVRKMALEPFIDEVLRKLAEDGKVAFEMRGGVKRWFGVGVL.

Residues histidine 104, histidine 106, aspartate 108, and histidine 109 each contribute to the Zn(2+) site. Aspartate 108 (proton donor/acceptor) is an active-site residue.

Belongs to the metallo-beta-lactamase superfamily. Zn(2+) serves as cofactor.

The catalysed reaction is atrochrysone carboxyl-[ACP] + H2O = atrochrysone carboxylate + holo-[ACP] + H(+). It participates in secondary metabolite biosynthesis. In terms of biological role, atrochrysone carboxyl ACP thioesterase; part of the gene cluster that mediates the biosynthesis of monodictyphenone, a prenyl xanthone derivative. The pathway begins with the synthesis of atrochrysone thioester by the polyketide synthase (PKS) mdpG. The atrochrysone carboxyl ACP thioesterase mdpF then breaks the thioester bond and releases the atrochrysone carboxylic acid from mdpG. The atrochrysone carboxylic acid is then converted to atrochrysone which is further transformed into emodin anthrone. The next step is performed by the anthrone oxygenase mdpH that catalyzes the oxidation of emodinanthrone to emodin. Emodin is further modified to yield monodictyphenone via several steps involving mdpB, mdpC mdpJ, mdpK and mdpL. The short chain dehydrogenase mdpC converts the tautomers of emodin hydroquinone into the 3-hydroxy-3,4-dihydroan-thracen-1(2H)-one derivative. These enzymes with xptA, xptB and xptC are also proposed to be involved in the synthesis of shamixanthone from emodin. Especially, direct reduction of emodin by the short chain dehydrogenase mdpC followed by dehydration catalyzed by the scytalone dehydratase-like protein mdpB gives loss of oxygen and formation of chrysophanol intermediate in two simple steps. This chain is Atrochrysone carboxyl ACP thioesterase, found in Emericella nidulans (strain FGSC A4 / ATCC 38163 / CBS 112.46 / NRRL 194 / M139) (Aspergillus nidulans).